Here is a 150-residue protein sequence, read N- to C-terminus: Large ribosomal subunit protein bL9 (150 aa).

It belongs to the bacterial ribosomal protein bL9 family.

Functionally, binds to the 23S rRNA. This is Large ribosomal subunit protein bL9 from Leuconostoc mesenteroides subsp. mesenteroides (strain ATCC 8293 / DSM 20343 / BCRC 11652 / CCM 1803 / JCM 6124 / NCDO 523 / NBRC 100496 / NCIMB 8023 / NCTC 12954 / NRRL B-1118 / 37Y).